Consider the following 714-residue polypeptide: Choline transporter-like protein 5 (714 aa).

Over 1–33 the chain is Cytoplasmic; sequence MGRRSAAPTSPFGEPRKFDPKFKGPIGKRHCTD. Residues 34 to 54 traverse the membrane as a helical segment; it reads VLCCIIFVVVILGYIALGVVA. Over 55–237 the chain is Extracellular; it reads WIHGDPRKII…KIFEDYASSW (183 aa). N-linked (GlcNAc...) asparagine glycosylation is found at Asn-83, Asn-132, Asn-192, and Asn-205. The chain crosses the membrane as a helical span at residues 238-258; sequence YWILIALFIAMVVSLLFLILL. At 259 to 261 the chain is on the cytoplasmic side; it reads RFT. A helical transmembrane segment spans residues 262–282; the sequence is AGVFFWIFIIGVIGVVGYGIW. The Extracellular segment spans residues 283–320; the sequence is HCFWEYDSLKGVPGADLTIYDIGLQTDFRVYLQLRQTW. A helical transmembrane segment spans residues 321–341; the sequence is LAFMILLCIVEVIIILMLIFL. Over 342–346 the chain is Cytoplasmic; the sequence is RNRIR. Residues 347–367 form a helical membrane-spanning segment; the sequence is IAIALLQEGSRAIGYIMSTLF. Topologically, residues 368-369 are extracellular; it reads YP. Residues 370-390 traverse the membrane as a helical segment; the sequence is IITFILIAICISYWAVTAVFM. Residues 391–455 lie on the Cytoplasmic side of the membrane; that stretch reads ATSGEPIYKV…QYILIFQLCN (65 aa). The chain crosses the membrane as a helical span at residues 456–476; that stretch reads VFVFLWLVNFSIALGQCTLAG. Residues 477-510 are Extracellular-facing; sequence AFASYYWAFKKPADIPACPLFSSFGRAIRYHTGS. Residues 511-531 form a helical membrane-spanning segment; sequence LALGSLILALVQFIRIILEYL. The Cytoplasmic portion of the chain corresponds to 532-605; that stretch reads DHKLKASQNS…RVAVLDKVTD (74 aa). Residues 606 to 626 traverse the membrane as a helical segment; it reads FLLFLGKVFVTGSVGVLAFFF. Over 627–644 the chain is Extracellular; sequence FTRKIPVLTDEAPALNYY. A helical membrane pass occupies residues 645–665; the sequence is WVPLLTVLIGSYLIAHGFFSV. Residues 666–711 lie on the Cytoplasmic side of the membrane; that stretch reads YAMCVDTLFLCFCEDLERNNGSSSKPYYMSPNLHRILGKKEILSKK.

This sequence belongs to the CTL (choline transporter-like) family.

Its subcellular location is the cell membrane. It catalyses the reaction choline(out) + n H(+)(in) = choline(in) + n H(+)(out). In terms of biological role, choline/H+ antiporter. The protein is Choline transporter-like protein 5 (slc44a5) of Xenopus tropicalis (Western clawed frog).